Here is a 657-residue protein sequence, read N- to C-terminus: Zinc finger protein 630 (657 aa).

Positions 8–79 (VTFEDVAVDF…ESELSRWIYP (72 aa)) constitute a KRAB domain. 2 C2H2-type zinc fingers span residues 263-285 (NVCS…QRIH) and 291-313 (YVCG…QRIH). Residues 319–341 (YECTKYGRAFSRKSPFTVHQRVH) form a C2H2-type 3; degenerate zinc finger. 9 consecutive C2H2-type zinc fingers follow at residues 347-369 (YECF…QRVH), 375-397 (FECS…QITH), 403-425 (YECT…QRTH), 431-453 (YKCG…QRIH), 459-481 (YVCT…QRLH), 487-509 (YMCT…QRIH), 515-537 (YQCG…LRVH), 543-565 (YECT…QRGH), and 571-593 (YECS…QKTH). A C2H2-type 13; degenerate zinc finger spans residues 599-621 (PECAESGMTFFWKSQMITYQRRH). A C2H2-type 14; degenerate zinc finger spans residues 627 to 649 (SRCSDCGKAFCQHVYFTGHQNPY).

Belongs to the krueppel C2H2-type zinc-finger protein family.

It localises to the nucleus. Its function is as follows. May be involved in transcriptional regulation. The chain is Zinc finger protein 630 (ZNF630) from Homo sapiens (Human).